The chain runs to 306 residues: Glutathione transport system permease protein GsiC (306 aa).

At 1 to 8 (MLNYVLKR) the chain is on the cytoplasmic side. A helical transmembrane segment spans residues 9-29 (LLGLIPTLLIVAVLVFLFVHL). Residues 30-102 (LPGDPARLIA…SRFLPTLWLT (73 aa)) lie on the Periplasmic side of the membrane. The ABC transmembrane type-1 domain occupies 95–292 (FLPTLWLTIT…LEFILINLVV (198 aa)). Residues 103–123 (ITSMIWAVLFGMAIGIAAAVW) traverse the membrane as a helical segment. At 124–134 (RNRWPDRLGMT) the chain is on the cytoplasmic side. The chain crosses the membrane as a helical span at residues 135 to 155 (LAVTGISFPAFALGMLLMQIF). Residues 156–168 (SVDLGWLPTVGAD) lie on the Periplasmic side of the membrane. The helical transmembrane segment at 169–189 (SWQHYILPSLTLGAAVASVMA) threads the bilayer. The Cytoplasmic portion of the chain corresponds to 190-228 (RFTRSSFVDVLSEDYMRTARAKGVSETWVVLKHGLRNAM). A helical membrane pass occupies residues 229–249 (IPVVTMMGLQFGFLLGGSIVV). Residues 250-278 (EKVFNWPGLGRLLVDSVDMRDYPVIQAEV) lie on the Periplasmic side of the membrane. A helical membrane pass occupies residues 279-299 (LLFSLEFILINLVVDVLYAAI). Over 300 to 306 (NPAIRYK) the chain is Cytoplasmic.

Belongs to the binding-protein-dependent transport system permease family. The complex is composed of two ATP-binding proteins (GsiA), two transmembrane proteins (GsiC and GsiD) and a solute-binding protein (GsiB).

It is found in the cell inner membrane. Part of the ABC transporter complex GsiABCD involved in glutathione import. Probably responsible for the translocation of the substrate across the membrane. The protein is Glutathione transport system permease protein GsiC of Salmonella paratyphi A (strain ATCC 9150 / SARB42).